The sequence spans 84 residues: Small ribosomal subunit protein uS17c (84 aa).

This sequence belongs to the universal ribosomal protein uS17 family. In terms of assembly, part of the 30S ribosomal subunit.

The protein resides in the plastid. It localises to the chloroplast. Its function is as follows. One of the primary rRNA binding proteins, it binds specifically to the 5'-end of 16S ribosomal RNA. This is Small ribosomal subunit protein uS17c (rps17) from Trieres chinensis (Marine centric diatom).